The following is a 78-amino-acid chain: Small ribosomal subunit protein bS18 (78 aa).

This sequence belongs to the bacterial ribosomal protein bS18 family. Part of the 30S ribosomal subunit. Forms a tight heterodimer with protein bS6.

Functionally, binds as a heterodimer with protein bS6 to the central domain of the 16S rRNA, where it helps stabilize the platform of the 30S subunit. This chain is Small ribosomal subunit protein bS18, found in Acidothermus cellulolyticus (strain ATCC 43068 / DSM 8971 / 11B).